The sequence spans 345 residues: D-fructose 1,6-bisphosphatase class 2/sedoheptulose 1,7-bisphosphatase (345 aa).

Mn(2+) is bound by residues Asp33, Glu57, Asp97, and Glu100. Substrate is bound by residues 100–102 (EGT), Tyr131, 176–178 (RPR), and 198–200 (DGD). Glu225 lines the Mn(2+) pocket.

This sequence belongs to the FBPase class 2 family. In terms of assembly, homotetramer. It depends on Mn(2+) as a cofactor.

The catalysed reaction is beta-D-fructose 1,6-bisphosphate + H2O = beta-D-fructose 6-phosphate + phosphate. It carries out the reaction D-sedoheptulose 1,7-bisphosphate + H2O = D-sedoheptulose 7-phosphate + phosphate. It functions in the pathway carbohydrate biosynthesis; Calvin cycle. With respect to regulation, inhibited by AMP and slightly innibited by hydrogen peroxyde. Catalyzes the hydrolysis of fructose 1,6-bisphosphate (Fru 1,6-P2) and sedoheptulose 1,7-bisphosphate (Sed 1,7-P2) to fructose 6-phosphate and sedoheptulose 7-phosphate, respectively. This is D-fructose 1,6-bisphosphatase class 2/sedoheptulose 1,7-bisphosphatase from Synechococcus elongatus (strain ATCC 33912 / PCC 7942 / FACHB-805) (Anacystis nidulans R2).